We begin with the raw amino-acid sequence, 862 residues long: MEPVSHQGMPRLSWIDTLYSNFNYGTDGYDAEGNEEHKSSREGSETMPYIDESPTMSPQLSARSQDSVDGVSPTPTEVLLPGGESESDKGLLMRKLVLSGVLASEEIYINQLEALLLPMKPLKATASTSQPVLTLQQINDIFYKIEDIYQMHKDFYDKLCPIVLQFDNKTTVGHLFQKLASQLGVYKAFVDNYKFALETAEKCSQCNVQFFKISEDLKVKGPKDSKEQPQSVTMEALLYKPIDRVTRSTLVLHDLLKHTPTDHPDYPLLQDALRISQNFLSSINEDIDPRRTAVTTPKGEPRQLVKDGFLVELSENSRKLRHLFLFTDLLLCAKLKKTTVGKHQQYDCKWYIPLADLVFPSPEESEPIPQLHATPDHEIEEMKAKISVLKSEIQKERKSNKGSSRTIERLKKKMFEYESWLLLYSPTIPFRIHNKNGKSYFFLLSSDYERSEWREAIQKLQKKDLQALALSPFELQVLTASCFKLRTVHNVPIISHKDDDESPGLYGFLHVIVKSAKGFSHSSNLYCTLEVDSFGYFVSKAKTRVFRDTTEPEWNEEFEIELEGSQCLRILCYEKCYDKSKLNKDNNEIVDKIMGKGQIQLDPQVVQSKNWHDDVIEMNGIKVEFSMKFSSRDMSLKRTPSKKQTGVFGVKISVVTKRERSKVPYIVRQCIEEVEKRGIEEVGIYRISGVATDIQALKASFDANSKDILMMLSDMDINAIAGTLKLYFRELPEPLLTDRLYLAFMEGIALSDPAAKENCMMHLLRSLPDPNLMTFLFLLQHLKRVAEKEPINKMSLHNLATVFGPTLLRPSEVESKGHMNLASDIWSHDVMAQVQVLLYYLQHPPISFSELKRSTLYYSTDV.

The tract at residues 30–84 is disordered; it reads DAEGNEEHKSSREGSETMPYIDESPTMSPQLSARSQDSVDGVSPTPTEVLLPGGE. The segment covering 34 to 44 has biased composition (basic and acidic residues); it reads NEEHKSSREGS. Positions 54–67 are enriched in polar residues; that stretch reads PTMSPQLSARSQDS. Residues 93-286 form the DH domain; that stretch reads MRKLVLSGVL…QNFLSSINED (194 aa). A PH domain is found at 303–462; sequence QLVKDGFLVE…WREAIQKLQK (160 aa). The region spanning 488–616 is the C2 domain; that stretch reads VHNVPIISHK…QSKNWHDDVI (129 aa). The Rho-GAP domain occupies 650–848; it reads VKISVVTKRE…YYLQHPPISF (199 aa).

It is found in the cell projection. Its subcellular location is the dendritic spine. The protein localises to the axon. The protein resides in the synapse. Protein with a unique structure having two opposing regulatory activities toward small GTP-binding proteins. The C-terminus is a GTPase-activating protein domain which stimulates GTP hydrolysis by RAC1, RAC2 and CDC42. Accelerates the intrinsic rate of GTP hydrolysis of RAC1 or CDC42, leading to down-regulation of the active GTP-bound form. The central Dbl homology (DH) domain functions as guanine nucleotide exchange factor (GEF) that modulates the GTPases CDC42, RHOA and RAC1. Promotes the conversion of CDC42, RHOA and RAC1 from the GDP-bound to the GTP-bound form. This Xenopus tropicalis (Western clawed frog) protein is Active breakpoint cluster region-related protein (abr).